A 218-amino-acid polypeptide reads, in one-letter code: Capsid protein (218 aa).

Residue M1 is modified to N-acetylmethionine; by host. Residues 1–10 (MDKSESTSAG) are compositionally biased toward low complexity. The interval 1-29 (MDKSESTSAGRNRRRRPRRGSRSASSSAD) is disordered. Positions 11–21 (RNRRRRPRRGS) are enriched in basic residues.

It belongs to the cucumovirus capsid protein family.

The protein resides in the virion. Its function is as follows. Capsid protein. Probably binds RNA and plays a role in packaging. The sequence is that of Capsid protein from Cucumis sativus (Cucumber).